We begin with the raw amino-acid sequence, 481 residues long: Beta-amyrin 28-monooxygenase (481 aa).

A helical membrane pass occupies residues 4 to 24 (FYVPLLSLFVLFISLSFHFLF). C428 serves as a coordination point for heme.

This sequence belongs to the cytochrome P450 family. Requires heme as cofactor. In terms of tissue distribution, mostly expressed in roots, and, to a lower extent, in stems and leaves. Accumulates only in the rhizome of plants.

It localises to the membrane. It carries out the reaction beta-amyrin + 3 reduced [NADPH--hemoprotein reductase] + 3 O2 = oleanolate + 3 oxidized [NADPH--hemoprotein reductase] + 4 H2O + 4 H(+). It participates in secondary metabolite biosynthesis; terpenoid biosynthesis. Functionally, component of the oleanane-type triterpene saponins (e.g. ginsenosides or panaxosides) biosynthetic pathway. Catalyzes the carboxylation of beta-amyrin at the C-28 position to form oleanolic acid during ginsenoside biosynthesis, a class of tetracyclic triterpenoid saponins. This is Beta-amyrin 28-monooxygenase from Panax ginseng (Korean ginseng).